The following is a 249-amino-acid chain: SRR1-like protein (249 aa).

Residues 1–40 (MAAAALEPWSAVAPRRRKRAAGRRPRPGEGPRAEPEADGE) are disordered. Residues 14–25 (PRRRKRAAGRRP) show a composition bias toward basic residues. A compositionally biased stretch (basic and acidic residues) spans 26–40 (RPGEGPRAEPEADGE).

It belongs to the SRR1 family.

The protein localises to the cytoplasm. Functionally, plays a role in the regulation of heme biosynthesis and in the regulation of the expression of core clock genes. This Mus musculus (Mouse) protein is SRR1-like protein (Srrd).